Consider the following 208-residue polypeptide: Uracil phosphoribosyltransferase (208 aa).

Residues arginine 78, arginine 103, and 130 to 138 each bind 5-phospho-alpha-D-ribose 1-diphosphate; that span reads DPMLATGGS. Uracil-binding positions include isoleucine 193 and 198 to 200; that span reads GDA. Position 199 (aspartate 199) interacts with 5-phospho-alpha-D-ribose 1-diphosphate.

It belongs to the UPRTase family. Mg(2+) is required as a cofactor.

It catalyses the reaction UMP + diphosphate = 5-phospho-alpha-D-ribose 1-diphosphate + uracil. The protein operates within pyrimidine metabolism; UMP biosynthesis via salvage pathway; UMP from uracil: step 1/1. With respect to regulation, allosterically activated by GTP. Catalyzes the conversion of uracil and 5-phospho-alpha-D-ribose 1-diphosphate (PRPP) to UMP and diphosphate. The chain is Uracil phosphoribosyltransferase from Colwellia psychrerythraea (strain 34H / ATCC BAA-681) (Vibrio psychroerythus).